A 1132-amino-acid chain; its full sequence is MDLSKWCNLKTEPSLKHLTEAGFGVPKEKQSVPVQELVKAHIESFDQAVTDGLCRVVEAIPPMEFLYKGDRISLSFVEAIIHTPSVSKGGISRDLRVFPAECRGRRCTYRAKLVADVSWSVNGVPKGIIKQSLGQMPIMVKSKLCNLHGLSPKELLEHHEEAEEMGGYFIVNGIEKVIRLLIMPRRNYPIAVSRPKFKSRGQGYTQYAISMRCVKEEHTAINMNLHYLDNGTVMVNFIYRKELFFLPLGFALKALVDYSDYQIYQELIKGREDNSFYKSCVSEMLRIVMDQGCTTKIKVLNYLGERFRVKLNLPEWFTHEQCAHFLLDECLCIHLKTDVEKFYMLCLMTRKLFSFAKQECMEENPDSPMFHEVLTPGQLYLMFLKEKMEGWLVSVKLALEKKPQRVGGLTPDSMTKLFNMGTDLTKAFEYLLATGNLMSKTGLGMLQNSGLCVVADKLNFIRYLSHFRCVHRGAAFAKMRTTTVRKLLPESWGFLCPVHTPDGEPCGLMNHMTAHCEIVAPVYPTSTLPGLLCSLGVNAADGNPGQAYSDCYPVILDGAMIGWVEKEVAPSVIESLRRFKVLGEKKVPPWTEIVLVPQTGKASLYPGLYLFTTPCRMVRTVRNLSLGKQELIGIFEQVYLNVGIFEKEIEDGVTTHQELFPHSMLSVVAEFIPFSDHNQSPRNMYQCQMSKQTMGFPLHSYQYRSDNKLYRLQTPQSPLVRPAMYDHYDVDNYPIGTNAIVAVISYTGYDMEDAMIVNKSSWERGFAHGSVYKTEIIDLSEKVKGDDSIVFGVKPGDPKVMGKLDADGLPFIGSVLKYGDPFYGYISLNTGQSHVYFYKYQESCVVDNIKVCSNETGTGRFKRICVTSRVPRNPTIGDKFASRHGQKGILSRLWPAEDMPFTESGMSPDILFNPHGFPSRMTIGMLIESMAGKSASLHGLCHDATPFTFSEENSALEHFGELLKAAGYNYYGTERLYSGLSGLELEADIFIGVVYYQRLRHMVSDKFQVRTTGARDKVTNQPMGGRNVQGGIRFGEMERDALLAHGTSFLLHDRLFNCSDRSVAQVCMDCGSLLSPLLEKPPPNWSATRHRKTICLLCNKSDSIETVSVPYVFKYFVAELAAMNIKIKLDVK.

The C4-type zinc-finger motif lies at 1067-1098 (CMDCGSLLSPLLEKPPPNWSATRHRKTICLLC).

The protein belongs to the RNA polymerase beta chain family. As to quaternary structure, component of the RNA polymerase I (Pol I) complex consisting of at least 13 subunits.

The protein resides in the nucleus. It is found in the nucleolus. It localises to the chromosome. The catalysed reaction is RNA(n) + a ribonucleoside 5'-triphosphate = RNA(n+1) + diphosphate. DNA-dependent RNA polymerase catalyzes the transcription of DNA into RNA using the four ribonucleoside triphosphates as substrates. Second largest core component of RNA polymerase I which synthesizes ribosomal RNA precursors. Proposed to contribute to the polymerase catalytic activity and forms the polymerase active center together with the largest subunit. Pol I is composed of mobile elements and RPA2 is part of the core element with the central large cleft and probably a clamp element that moves to open and close the cleft. This chain is DNA-directed RNA polymerase I subunit RPA2 (polr1b), found in Danio rerio (Zebrafish).